The following is a 241-amino-acid chain: uncharacterized protein (241 aa).

6 consecutive transmembrane segments (helical) span residues 1-21 (MMMA…GILL), 43-63 (FPII…LKNL), 75-95 (LPIY…FYAI), 108-128 (IYVL…VLML), 160-180 (VLTS…HGLL), and 200-220 (ILVI…IASG).

To M.jannaschii MJ0871, MJ0880 and MJ1556.

Its subcellular location is the cell membrane. This is an uncharacterized protein from Methanocaldococcus jannaschii (strain ATCC 43067 / DSM 2661 / JAL-1 / JCM 10045 / NBRC 100440) (Methanococcus jannaschii).